A 380-amino-acid chain; its full sequence is Adaptive-response sensory kinase SasA (380 aa).

The tract at residues 20 to 101 is kaiB-like domain, interacts with KaiC; that stretch reads LLFVANRPGD…QKVDYWWPRW (82 aa). Residues 157–380 form the Histidine kinase domain; that stretch reads LLAHELRNPL…CFHFTLPVYS (224 aa). His-160 carries the post-translational modification Phosphohistidine; by autocatalysis.

As to quaternary structure, homotrimer with a small amount of possible homohexamer; a protein fragment of 109-380 is also a homotrimer. Interacts with KaiC, probably as 1 SasA trimer:1 KaiC homohexamer; unphosphorylated SasA has the highest affinity. Homodimer. Binds to the B-loop in the CI domain of KaiC; SasA and KaiB(fs) compete to bind to the CI domain. Binds preferentially to doubly phosphorylated KaiC. In terms of processing, autophosphorylates, probably on His-160.

It carries out the reaction ATP + protein L-histidine = ADP + protein N-phospho-L-histidine.. Member of the two-component regulatory system SasA/RpaA involved in genome-wide circadian gene expression. One of several clock output pathways. Participates in the Kai clock protein complex, the main circadian regulator in cyanobacteria, via its interaction with KaiC. KaiC enhances the autophosphorylation activity of SasA, which then transfers its phosphate group to RpaA to activate it. In addition to its output function, recruits fold-shifted KaiB (KaiB(fs)) to KaiC to cooperatively form the KaiB(6):KaiC(6) complex (independent of SasA kinase activity). Required for robustness of the circadian rhythm of gene expression and is involved in clock output, also required for adaptation to light/dark cycles. The sequence is that of Adaptive-response sensory kinase SasA from Thermosynechococcus vestitus (strain NIES-2133 / IAM M-273 / BP-1).